A 239-amino-acid chain; its full sequence is Ribonuclease PH (239 aa).

Residues Arg-87 and 125-127 each bind phosphate; that span reads GTR.

The protein belongs to the RNase PH family. In terms of assembly, homohexameric ring arranged as a trimer of dimers.

The catalysed reaction is tRNA(n+1) + phosphate = tRNA(n) + a ribonucleoside 5'-diphosphate. Functionally, phosphorolytic 3'-5' exoribonuclease that plays an important role in tRNA 3'-end maturation. Removes nucleotide residues following the 3'-CCA terminus of tRNAs; can also add nucleotides to the ends of RNA molecules by using nucleoside diphosphates as substrates, but this may not be physiologically important. Probably plays a role in initiation of 16S rRNA degradation (leading to ribosome degradation) during starvation. The sequence is that of Ribonuclease PH from Syntrophomonas wolfei subsp. wolfei (strain DSM 2245B / Goettingen).